The sequence spans 307 residues: Membrane protein insertase YidC 2 (307 aa).

Positions 1 to 23 (MKLTLNRILFSGLALSILLTLTG) are cleaved as a signal peptide. A lipid anchor (N-palmitoyl cysteine) is attached at C24. C24 carries S-diacylglycerol cysteine lipidation. The next 5 helical transmembrane spans lie at 58-78 (LGYGLAIIIVTIIVRTLILPL), 135-155 (LGGIGCLPLLIQMPFFSAMYF), 179-199 (VLTAIIAALYFFQSWLSMMAV), 209-225 (TMMYTMPIMMIFMSFSL), and 231-251 (LYWLVGGFFSIIQQLITTYLL). A disordered region spans residues 263 to 307 (YAKNPPKAYQSTSSRKDVTPSQNMEQANLPKKIKSNRNAGKQRKR). A compositionally biased stretch (polar residues) spans 271-288 (YQSTSSRKDVTPSQNMEQ). Positions 293–307 (KKIKSNRNAGKQRKR) are enriched in basic residues.

Belongs to the OXA1/ALB3/YidC family. Type 2 subfamily.

It localises to the cell membrane. Its function is as follows. Required for the insertion and/or proper folding and/or complex formation of integral membrane proteins into the membrane. Involved in integration of membrane proteins that insert both dependently and independently of the Sec translocase complex, as well as at least some lipoproteins. The protein is Membrane protein insertase YidC 2 of Streptococcus pyogenes serotype M1.